Reading from the N-terminus, the 947-residue chain is Translation initiation factor IF-2 (947 aa).

Residues 61-284 (IQANQPAKNP…TAKNNKSHKI (224 aa)) are disordered. Residues 151-169 (QIEKAKQKLQEIQKSREAL) are compositionally biased toward basic and acidic residues. Over residues 175 to 188 (SNANNANSTNNANN) the composition is skewed to low complexity. The span at 189-206 (AKKEISEVKKQEQEIKRH) shows a compositional bias: basic and acidic residues. A compositionally biased stretch (basic residues) spans 207 to 218 (ENIKRRTGFRVI). Over residues 247-262 (EDIKKEWQEKDKQEAK) the composition is skewed to basic and acidic residues. The region spanning 446–615 (ERPPVVTIMG…LIQADIMELK (170 aa)) is the tr-type G domain. The segment at 455 to 462 (GHVDHGKT) is G1. 455-462 (GHVDHGKT) serves as a coordination point for GTP. The segment at 480-484 (GITQH) is G2. Residues 501–504 (DTPG) form a G3 region. GTP contacts are provided by residues 501–505 (DTPGH) and 555–558 (NKMD). The tract at residues 555–558 (NKMD) is G4. Residues 591 to 593 (SAK) are G5.

The protein belongs to the TRAFAC class translation factor GTPase superfamily. Classic translation factor GTPase family. IF-2 subfamily.

The protein resides in the cytoplasm. Functionally, one of the essential components for the initiation of protein synthesis. Protects formylmethionyl-tRNA from spontaneous hydrolysis and promotes its binding to the 30S ribosomal subunits. Also involved in the hydrolysis of GTP during the formation of the 70S ribosomal complex. This chain is Translation initiation factor IF-2, found in Helicobacter pylori (strain P12).